The primary structure comprises 253 residues: Blue-light photoreceptor (253 aa).

The PAS domain maps to 6–79; it reads KFDVILKALN…AKIRHAINEK (74 aa). Residue cysteine 56 is modified to S-4a-FMN cysteine. The PAC domain occupies 80–133; it reads STANVLLKNYRKNGTSFMNELTIEPIYDDNDHLYFVGIQKDVTTEHNYQLELEK. Residues 142 to 253 form the STAS domain; the sequence is STPIVPIKEN…STIKEALQFY (112 aa).

FMN binds covalently to cysteine after exposure to blue light and this bond is spontaneously broken in the dark.

In terms of biological role, exhibits the same spectroscopical features and blue-light induced photochemistry as plants phototropins, with the reversible formation of a blue-shifted photoproduct, assigned to an FMN-cysteine thiol adduct. Positive regulator in the activation of the general stress transcription factor sigma-B. The chain is Blue-light photoreceptor from Listeria innocua serovar 6a (strain ATCC BAA-680 / CLIP 11262).